The following is a 226-amino-acid chain: Late protein I226R (226 aa).

An N-terminal signal peptide occupies residues 1–16; it reads MKMETFLVCLFHNAAG. Asn164 carries an N-linked (GlcNAc...) asparagine; by host glycan.

The protein belongs to the asfivirus I226R family.

Plays a role in the inhibition of host NF-kappa-B and IRF3 signaling pathways. Mechanistically, promotes the degradation of host IKBKG through enhancing its ubiquitination leading to inhibition of both pathways. This is Late protein I226R from African swine fever virus (isolate Pig/Kenya/KEN-50/1950) (ASFV).